The following is a 356-amino-acid chain: tRNA-specific 2-thiouridylase MnmA (356 aa).

Residues 6–13 (AMSGGVDS) and Leu32 contribute to the ATP site. Cys101 acts as the Nucleophile in catalysis. Cys101 and Cys193 are disulfide-bonded. Position 125 (Gly125) interacts with ATP. Positions 143-145 (KDQ) are interaction with tRNA. Residue Cys193 is the Cysteine persulfide intermediate of the active site.

The protein belongs to the MnmA/TRMU family.

It localises to the cytoplasm. The enzyme catalyses S-sulfanyl-L-cysteinyl-[protein] + uridine(34) in tRNA + AH2 + ATP = 2-thiouridine(34) in tRNA + L-cysteinyl-[protein] + A + AMP + diphosphate + H(+). In terms of biological role, catalyzes the 2-thiolation of uridine at the wobble position (U34) of tRNA, leading to the formation of s(2)U34. The polypeptide is tRNA-specific 2-thiouridylase MnmA (Mycobacteroides abscessus (strain ATCC 19977 / DSM 44196 / CCUG 20993 / CIP 104536 / JCM 13569 / NCTC 13031 / TMC 1543 / L948) (Mycobacterium abscessus)).